Here is a 335-residue protein sequence, read N- to C-terminus: MLQGYSSVSQALLGTFFTWAMTAAGAALVFIFSSGQRRILDGSLGFAAGVMLAASYWSLLAPAVEMATSSGGFGAFAFFPVAVGFTLGAAFVYLADLLMPHLGAGEDPQTALALNLDPALVKKSDLKDPASLLFPERELSIRIDKRENGEVYQRKKLAATDFPEGAAPSGPVHGNSGQPGVSSWRRIALLILAITIHNIPEGLAVGVGFGAVEKTASATFESARNLAIGIGIQNFPEGLAVSLPLRGAGFSTWKAFWYGQLSGMVEPLAGVFGAFAVVLAEPVLPYALAFAAGAMVYVVMDDIIPEAQISGNGKLASWASILGFVVMMSLDVGLG.

Transmembrane regions (helical) follow at residues 12–32 (LLGT…VFIF), 44–64 (LGFA…APAV), 72–92 (GFGA…AAFV), 187–207 (IALL…AVGV), 256–278 (FWYG…FAVV), 283–300 (VLPY…YVVM), and 315–335 (LASW…VGLG).

The protein belongs to the ZIP transporter (TC 2.A.5) family.

It is found in the cell membrane. Its subcellular location is the nucleus. It localises to the cytoplasm. The protein resides in the golgi apparatus. It carries out the reaction Zn(2+)(in) = Zn(2+)(out). The enzyme catalyses Cu(2+)(in) = Cu(2+)(out). Functionally, zinc importer that regulates cytosolic zinc concentrations either via zinc influx from the extracellular compartment or efflux from intracellular organelles such as Golgi apparatus. May transport copper ions as well. The transport mechanism remains to be elucidated. This is Zinc transporter ZIP11 (Slc39a11) from Rattus norvegicus (Rat).